Reading from the N-terminus, the 62-residue chain is DNA-directed RNA polymerase subunit Rpo10 (62 aa).

Zn(2+) contacts are provided by C6, C9, C43, and C44.

The protein belongs to the archaeal Rpo10/eukaryotic RPB10 RNA polymerase subunit family. In terms of assembly, part of the RNA polymerase complex. Zn(2+) serves as cofactor.

Its subcellular location is the cytoplasm. It carries out the reaction RNA(n) + a ribonucleoside 5'-triphosphate = RNA(n+1) + diphosphate. Its function is as follows. DNA-dependent RNA polymerase (RNAP) catalyzes the transcription of DNA into RNA using the four ribonucleoside triphosphates as substrates. This chain is DNA-directed RNA polymerase subunit Rpo10, found in Methanosarcina mazei (strain ATCC BAA-159 / DSM 3647 / Goe1 / Go1 / JCM 11833 / OCM 88) (Methanosarcina frisia).